A 461-amino-acid chain; its full sequence is Bifunctional protein GlmU (461 aa).

The interval 1 to 229 (MEKYVVVLAA…FSESLGVNDR (229 aa)) is pyrophosphorylase. UDP-N-acetyl-alpha-D-glucosamine-binding positions include 8 to 11 (LAAG), lysine 22, glutamine 72, and 77 to 78 (GT). Aspartate 102 serves as a coordination point for Mg(2+). The UDP-N-acetyl-alpha-D-glucosamine site is built by glycine 139, glutamate 154, asparagine 169, and asparagine 227. Asparagine 227 provides a ligand contact to Mg(2+). A linker region spans residues 230-250 (IALAEATRIMQRRINEGHMRD). The segment at 251–461 (GVTFIDPATA…LPLSEDEEWK (211 aa)) is N-acetyltransferase. Arginine 332 and lysine 350 together coordinate UDP-N-acetyl-alpha-D-glucosamine. Histidine 362 functions as the Proton acceptor in the catalytic mechanism. The UDP-N-acetyl-alpha-D-glucosamine site is built by tyrosine 365 and asparagine 376. The acetyl-CoA site is built by alanine 422 and arginine 439.

It in the N-terminal section; belongs to the N-acetylglucosamine-1-phosphate uridyltransferase family. In the C-terminal section; belongs to the transferase hexapeptide repeat family. In terms of assembly, homotrimer. The cofactor is Mg(2+).

Its subcellular location is the cytoplasm. It carries out the reaction alpha-D-glucosamine 1-phosphate + acetyl-CoA = N-acetyl-alpha-D-glucosamine 1-phosphate + CoA + H(+). It catalyses the reaction N-acetyl-alpha-D-glucosamine 1-phosphate + UTP + H(+) = UDP-N-acetyl-alpha-D-glucosamine + diphosphate. Its pathway is nucleotide-sugar biosynthesis; UDP-N-acetyl-alpha-D-glucosamine biosynthesis; N-acetyl-alpha-D-glucosamine 1-phosphate from alpha-D-glucosamine 6-phosphate (route II): step 2/2. The protein operates within nucleotide-sugar biosynthesis; UDP-N-acetyl-alpha-D-glucosamine biosynthesis; UDP-N-acetyl-alpha-D-glucosamine from N-acetyl-alpha-D-glucosamine 1-phosphate: step 1/1. It functions in the pathway bacterial outer membrane biogenesis; LPS lipid A biosynthesis. Functionally, catalyzes the last two sequential reactions in the de novo biosynthetic pathway for UDP-N-acetylglucosamine (UDP-GlcNAc). The C-terminal domain catalyzes the transfer of acetyl group from acetyl coenzyme A to glucosamine-1-phosphate (GlcN-1-P) to produce N-acetylglucosamine-1-phosphate (GlcNAc-1-P), which is converted into UDP-GlcNAc by the transfer of uridine 5-monophosphate (from uridine 5-triphosphate), a reaction catalyzed by the N-terminal domain. This is Bifunctional protein GlmU from Lactobacillus delbrueckii subsp. bulgaricus (strain ATCC 11842 / DSM 20081 / BCRC 10696 / JCM 1002 / NBRC 13953 / NCIMB 11778 / NCTC 12712 / WDCM 00102 / Lb 14).